The sequence spans 310 residues: Tagatose-6-phosphate kinase (310 aa).

Belongs to the carbohydrate kinase PfkB family. LacC subfamily.

The catalysed reaction is D-tagatofuranose 6-phosphate + ATP = D-tagatofuranose 1,6-bisphosphate + ADP + H(+). It functions in the pathway carbohydrate metabolism; D-tagatose 6-phosphate degradation; D-glyceraldehyde 3-phosphate and glycerone phosphate from D-tagatose 6-phosphate: step 1/2. This Streptococcus agalactiae serotype Ia (strain ATCC 27591 / A909 / CDC SS700) protein is Tagatose-6-phosphate kinase.